The chain runs to 389 residues: Putative phosphoserine aminotransferase (389 aa).

An L-glutamate-binding site is contributed by arginine 45. Residues glycine 79 to threonine 80, tryptophan 114, threonine 169, aspartate 191, and glutamine 214 contribute to the pyridoxal 5'-phosphate site. Lysine 215 is modified (N6-(pyridoxal phosphate)lysine). Residue asparagine 265–threonine 266 coordinates pyridoxal 5'-phosphate.

This sequence belongs to the class-V pyridoxal-phosphate-dependent aminotransferase family. SerC subfamily. As to quaternary structure, homodimer. Pyridoxal 5'-phosphate is required as a cofactor.

It catalyses the reaction O-phospho-L-serine + 2-oxoglutarate = 3-phosphooxypyruvate + L-glutamate. The enzyme catalyses 4-(phosphooxy)-L-threonine + 2-oxoglutarate = (R)-3-hydroxy-2-oxo-4-phosphooxybutanoate + L-glutamate. It functions in the pathway amino-acid biosynthesis; L-serine biosynthesis; L-serine from 3-phospho-D-glycerate: step 2/3. It participates in cofactor biosynthesis; pyridoxine 5'-phosphate biosynthesis; pyridoxine 5'-phosphate from D-erythrose 4-phosphate: step 3/5. Its function is as follows. Catalyzes the reversible conversion of 3-phosphohydroxypyruvate to phosphoserine and of 3-hydroxy-2-oxo-4-phosphonooxybutanoate to phosphohydroxythreonine. The sequence is that of Putative phosphoserine aminotransferase from Schizosaccharomyces pombe (strain 972 / ATCC 24843) (Fission yeast).